The primary structure comprises 312 residues: HTH-type transcriptional regulator TdcA (312 aa).

The HTH lysR-type domain occupies 7-64 (PKTQHLVVFQEVIRSGSIGSAAKELGLTQPAVSKIINDIEDYFGVELVVRKNTGVTLT). The segment at residues 24 to 43 (IGSAAKELGLTQPAVSKIIN) is a DNA-binding region (H-T-H motif).

This sequence belongs to the LysR transcriptional regulatory family.

It functions in the pathway amino-acid degradation; L-threonine degradation via propanoate pathway [regulation]. In terms of biological role, transcriptional activator for the tdcABCDE operon. This is HTH-type transcriptional regulator TdcA (tdcA) from Escherichia coli O157:H7.